Reading from the N-terminus, the 230-residue chain is UPF0173 metal-dependent hydrolase OEOE_1287 (230 aa).

This sequence belongs to the UPF0173 family.

The protein is UPF0173 metal-dependent hydrolase OEOE_1287 of Oenococcus oeni (strain ATCC BAA-331 / PSU-1).